The chain runs to 265 residues: Shikimate dehydrogenase (NADP(+)) (265 aa).

Residues 14–16 and threonine 61 contribute to the shikimate site; that span reads SLS. Lysine 65 serves as the catalytic Proton acceptor. Positions 85 and 100 each coordinate shikimate. Residues 123–127, 146–151, and alanine 209 contribute to the NADP(+) site; these read GAGGA and NRTESK. Tyrosine 211 is a binding site for shikimate. Glycine 232 serves as a coordination point for NADP(+).

Belongs to the shikimate dehydrogenase family. Homodimer.

It carries out the reaction shikimate + NADP(+) = 3-dehydroshikimate + NADPH + H(+). The protein operates within metabolic intermediate biosynthesis; chorismate biosynthesis; chorismate from D-erythrose 4-phosphate and phosphoenolpyruvate: step 4/7. Functionally, involved in the biosynthesis of the chorismate, which leads to the biosynthesis of aromatic amino acids. Catalyzes the reversible NADPH linked reduction of 3-dehydroshikimate (DHSA) to yield shikimate (SA). In Haloarcula marismortui (strain ATCC 43049 / DSM 3752 / JCM 8966 / VKM B-1809) (Halobacterium marismortui), this protein is Shikimate dehydrogenase (NADP(+)).